A 456-amino-acid polypeptide reads, in one-letter code: tRNA modification GTPase MnmE (456 aa).

Residues Lys-29, Glu-87, and Arg-126 each contribute to the (6S)-5-formyl-5,6,7,8-tetrahydrofolate site. Residues 222–380 enclose the TrmE-type G domain; it reads GYKLAIIGRP…LLSLLASWLD (159 aa). Asn-232 contacts K(+). Residues 232–237, 251–257, and 276–279 each bind GTP; these read NVGKSS, SDIPGTT, and DTAG. Ser-236 contributes to the Mg(2+) binding site. Ser-251, Ile-253, and Thr-256 together coordinate K(+). Position 257 (Thr-257) interacts with Mg(2+). Residue Lys-456 participates in (6S)-5-formyl-5,6,7,8-tetrahydrofolate binding.

Belongs to the TRAFAC class TrmE-Era-EngA-EngB-Septin-like GTPase superfamily. TrmE GTPase family. Homodimer. Heterotetramer of two MnmE and two MnmG subunits. Requires K(+) as cofactor.

The protein localises to the cytoplasm. In terms of biological role, exhibits a very high intrinsic GTPase hydrolysis rate. Involved in the addition of a carboxymethylaminomethyl (cmnm) group at the wobble position (U34) of certain tRNAs, forming tRNA-cmnm(5)s(2)U34. The polypeptide is tRNA modification GTPase MnmE (Wolinella succinogenes (strain ATCC 29543 / DSM 1740 / CCUG 13145 / JCM 31913 / LMG 7466 / NCTC 11488 / FDC 602W) (Vibrio succinogenes)).